A 662-amino-acid chain; its full sequence is Pollen receptor-like kinase 1 (662 aa).

A signal peptide spans 1 to 31; sequence MPPMQARTLSVYNVMVPLVCLLLFFSTPTHG. Over 32-256 the chain is Extracellular; sequence LSDSEAILKF…ARPKSSSRGP (225 aa). LRR repeat units follow at residues 79-98, 99-121, 122-144, 147-169, 171-191, and 192-214; these read QMEN…SGLT, SLRT…KKLA, ALKS…AFEG, WLKK…VAKL, KLLE…EFEH, and QLHL…LSMT. An N-linked (GlcNAc...) asparagine glycan is attached at N197. Residues 233-253 form a disordered region; that stretch reads ECDSPYIEHPPQSEARPKSSS. A helical transmembrane segment spans residues 257–277; sequence LVITAIVAALTILIILGVIFL. Residues 278–662 lie on the Cytoplasmic side of the membrane; that stretch reads LNRSYKNKKP…GESCESISFA (385 aa). The segment at 288-330 is disordered; it reads RLAVETGPSSLQKKTGIREADQSRRDRKKADHRKGSGTTKRMG. A Protein kinase domain is found at 357-639; that stretch reads KASAEILGSG…EREGDDDDFY (283 aa). Residue S359 is modified to Phosphoserine. ATP contacts are provided by residues 363–371 and K385; that span reads LGSGCFGAS. Phosphoserine is present on S437. T457 bears the Phosphothreonine mark. Position 527 is a phosphotyrosine (Y527). Residues 636–662 form a disordered region; it reads DDFYSTYVSETDGRSSKGESCESISFA. Positions 646–655 are enriched in basic and acidic residues; the sequence is TDGRSSKGES.

The protein belongs to the protein kinase superfamily. Ser/Thr protein kinase family. Interacts in vitro with ROPGEF1 (via PRONE domain). In terms of tissue distribution, expressed in pollen and/or in flowers, but not in leaves.

The protein localises to the cell membrane. It carries out the reaction L-seryl-[protein] + ATP = O-phospho-L-seryl-[protein] + ADP + H(+). It catalyses the reaction L-threonyl-[protein] + ATP = O-phospho-L-threonyl-[protein] + ADP + H(+). Its function is as follows. Receptor-like kinase involved in the control of pollen germination and pollen tube polar growth. This is Pollen receptor-like kinase 1 from Arabidopsis thaliana (Mouse-ear cress).